The following is a 93-amino-acid chain: MFCVIYRSTKREQTYLYVEKKDDFSRVPDELMRGFGTPQMAMLLPLDGRKKLVNADLEKVKQALSEQGYYLQLPPPSENLLKKHLAEQGKQSD.

The YcgL domain maps to 1–85 (MFCVIYRSTK…PSENLLKKHL (85 aa)).

This is YcgL domain-containing protein KPK_1976 from Klebsiella pneumoniae (strain 342).